Reading from the N-terminus, the 465-residue chain is Serine carboxypeptidase 24 (465 aa).

An N-terminal signal peptide occupies residues M1 to S24. 3 N-linked (GlcNAc...) asparagine glycosylation sites follow: N54, N105, and N139. 3 disulfides stabilise this stretch: C88-C349, C249-C260, and C285-C317. The active site involves S181. N250, N293, and N338 each carry an N-linked (GlcNAc...) asparagine glycan. The propeptide at A287–P316 is linker peptide. Residues D386 and H438 contribute to the active site.

This sequence belongs to the peptidase S10 family. As to quaternary structure, heterodimer. In terms of processing, N-glycosylated. As to expression, expressed in shoots, leaves, cauline leaves, siliques and flowers. Expressed a low levels in roots and stems.

It localises to the secreted. The protein resides in the extracellular space. The enzyme catalyses Preferential release of a C-terminal arginine or lysine residue.. With respect to regulation, completely inhibited by phenylmethylsulfonyl fluoride (PMSF) and partially by leupeptin. Functionally, active serine carboxypeptidase with broad substrate preference, including basic and hydrophilic groups. Processes a protein involved in an early event in the brassinosteroid signaling pathway. This is Serine carboxypeptidase 24 (SCPL24) from Arabidopsis thaliana (Mouse-ear cress).